Consider the following 650-residue polypeptide: PTS system mannose-specific EIIBCA component (650 aa).

The PTS EIIB type-2 domain maps to 1 to 98 (MKLLAITSCP…PEELIQKALN (98 aa)). Cys9 acts as the Phosphocysteine intermediate; for EIIB activity in catalysis. Positions 123–456 (IYRHLMNGVS…SLVTALFVNV (334 aa)) constitute a PTS EIIC type-2 domain. A run of 7 helical transmembrane segments spans residues 133–153 (FMVPFIVVGGLLIAVALTLGG), 174–194 (IGSASFSFMIPILAGYIAYSI), 199–219 (GLVPGMIGGYIAATGSFYDSA), 221–241 (GAGFLGGIIAGFLAGYAALWI), 256–276 (IIIIPVFASLIVGLAFVFLIG), 297–317 (SSILLALILGAMISFDMGGPV), and 336–356 (IMGPIAVAICIPPIGLGIATF). Ser365 bears the Phosphoserine mark. 3 consecutive transmembrane segments (helical) span residues 369-389 (MGKAAFTMGLFGITEGAIPFA), 396-416 (VIPSIMAGSMTGSVIAMIGNV), and 436-456 (VLMFFIAVIAGSLVTALFVNV). Positions 504–649 (DIISPELIEP…EEAYKLLEEI (146 aa)) constitute a PTS EIIA type-2 domain. Residue His566 is the Tele-phosphohistidine intermediate; for EIIA activity of the active site.

The protein resides in the cell membrane. The enzyme catalyses D-mannose(out) + N(pros)-phospho-L-histidyl-[protein] = D-mannose 6-phosphate(in) + L-histidyl-[protein]. In terms of biological role, the phosphoenolpyruvate-dependent sugar phosphotransferase system (sugar PTS), a major carbohydrate active -transport system, catalyzes the phosphorylation of incoming sugar substrates concomitantly with their translocation across the cell membrane. This system is involved in mannose transport. The protein is PTS system mannose-specific EIIBCA component (manP) of Bacillus subtilis (strain 168).